The sequence spans 180 residues: uncharacterized protein (180 aa).

The region spanning 31–180 (LLVRTAEWLR…HLFEKEITAE (150 aa)) is the N-acetyltransferase domain.

This sequence belongs to the acetyltransferase family.

This is an uncharacterized protein from Bacillus subtilis (strain 168).